Reading from the N-terminus, the 562-residue chain is Dihydroxy-acid dehydratase (562 aa).

Cysteine 53 provides a ligand contact to [2Fe-2S] cluster. Mg(2+) is bound at residue aspartate 85. Cysteine 126 is a binding site for [2Fe-2S] cluster. The Mg(2+) site is built by aspartate 127 and lysine 128. Residue lysine 128 is modified to N6-carboxylysine. [2Fe-2S] cluster is bound at residue cysteine 198. Glutamate 449 serves as a coordination point for Mg(2+). Residue serine 475 is the Proton acceptor of the active site.

This sequence belongs to the IlvD/Edd family. As to quaternary structure, homodimer. The cofactor is [2Fe-2S] cluster. Mg(2+) serves as cofactor.

The enzyme catalyses (2R)-2,3-dihydroxy-3-methylbutanoate = 3-methyl-2-oxobutanoate + H2O. The catalysed reaction is (2R,3R)-2,3-dihydroxy-3-methylpentanoate = (S)-3-methyl-2-oxopentanoate + H2O. The protein operates within amino-acid biosynthesis; L-isoleucine biosynthesis; L-isoleucine from 2-oxobutanoate: step 3/4. It functions in the pathway amino-acid biosynthesis; L-valine biosynthesis; L-valine from pyruvate: step 3/4. Functions in the biosynthesis of branched-chain amino acids. Catalyzes the dehydration of (2R,3R)-2,3-dihydroxy-3-methylpentanoate (2,3-dihydroxy-3-methylvalerate) into 2-oxo-3-methylpentanoate (2-oxo-3-methylvalerate) and of (2R)-2,3-dihydroxy-3-methylbutanoate (2,3-dihydroxyisovalerate) into 2-oxo-3-methylbutanoate (2-oxoisovalerate), the penultimate precursor to L-isoleucine and L-valine, respectively. The protein is Dihydroxy-acid dehydratase of Methylococcus capsulatus (strain ATCC 33009 / NCIMB 11132 / Bath).